Consider the following 4080-residue polypeptide: Hybrid PKS-NRPS synthetase poxE (4080 aa).

Residues 8-442 enclose the Ketosynthase family 3 (KS3) domain; sequence REPIAIVGSG…GTNAHAIIEA (435 aa). Catalysis depends on for beta-ketoacyl synthase activity residues Cys-181, His-320, and His-362. The segment at 554–878 is malonyl-CoA:ACP transacylase (MAT) domain; it reads VFTGQGAQWA…QRGMNDVEAM (325 aa). Positions 944–1078 are N-terminal hotdog fold; the sequence is HPILGTRCPD…GRLVITYGPV (135 aa). One can recognise a PKS/mFAS DH domain in the interval 944 to 1246; it reads HPILGTRCPD…AVPLEATNAD (303 aa). Positions 945-1243 are dehydratase (DH) domain; that stretch reads PILGTRCPDG…GIHAVPLEAT (299 aa). His-976 functions as the Proton acceptor; for dehydratase activity in the catalytic mechanism. The segment at 1093–1246 is C-terminal hotdog fold; sequence MVDVPSERFY…AVPLEATNAD (154 aa). The active-site Proton donor; for dehydratase activity is Asp-1152. Residues 1400-1585 form a methyltransferase (MT) domain region; that stretch reads HFSDYLASVV…GVDTFTSDAD (186 aa). A ketoreductase (KR)domain region spans residues 2118 to 2292; the sequence is TYWLVGLTGS…AGSVMNIGAI (175 aa). The peptidyl carrier protein stretch occupies residues 2399-2478; that stretch reads TTDEIYEVIK…TIGEIIKFVL (80 aa). Positions 2405-2481 constitute a Carrier 1 domain; it reads EVIKECFIVK…EIIKFVLEKL (77 aa). The residue at position 2441 (Ser-2441) is an O-(pantetheine 4'-phosphoryl)serine. A disordered region spans residues 2488-2569; the sequence is SLGLSPPTGA…AASPSIHTEE (82 aa). Positions 2511–2525 are enriched in basic and acidic residues; that stretch reads VVVERRNVPRLEKKI. Residues 2528 to 2545 are compositionally biased toward low complexity; sequence SAGSRTSSSVTGTSKSVS. Residues 2551–2565 show a composition bias toward polar residues; it reads DTASSQTSEAASPSI. The condensation stretch occupies residues 2607-3036; the sequence is KEPLSFGQSR…DSKQPGGHVS (430 aa). The adenylation stretch occupies residues 3069–3478; that stretch reads DMAKQYPQKL…DGRLRIEGRI (410 aa). The region spanning 3593 to 3673 is the Carrier 2 domain; sequence AHLNEAQAQM…KMALLIKPQE (81 aa). The tract at residues 3598–3670 is thiolation; it reads AQAQMVQLWE…TLEKMALLIK (73 aa). O-(pantetheine 4'-phosphoryl)serine is present on Ser-3633. A reductase (RED) domain region spans residues 3740 to 3959; sequence LTGATGFIGQ…DFVPVEQVVR (220 aa).

The protein in the C-terminal section; belongs to the NRP synthetase family.

It functions in the pathway secondary metabolite biosynthesis. Functionally, hybrid PKS-NRPS synthetase; part of the gene cluster that mediates the biosynthesis of oxaleimides, cytotoxic compounds containing an unusual disubstituted succinimide moiety. The first step of the pathway is provided by the HR-PKS poxF that serves in a new mode of collaborative biosynthesis with the PKS-NRPS poxE, by providing the olefin containing amino acid substrate via the synthesis of an ACP-bound dec-4-enoate. The cytochrome P450 monooxygenase poxM-catalyzed oxidation at the alpha-position creates the enzyme-bound 2-hydroxydec-4-enoyl-ACP thioester, which may be prone to spontaneous hydrolysis to yield 2-hydroxydec-4-enoic acid due to increased electrophilicity of the carbonyl. 2-hydroxydec-4-enoic acid can then be further oxidized by poxM to yield the alpha-ketoacid 2-oxodec-4-enoicacid, which is reductively aminated by the aminotransferase poxL to yield (S,E)-2-aminodec-4-enoic acid. The Hybrid PKS-NRPS synthetase poxE then performs condensation between the octaketide product of its PKS modules and the amino group of (S,E)-2-aminodec-4-enoic acid which is activated and incorporated by the adenylation domain. The resulting aminoacyl product can be cyclized by the Diels-Alderase PoxQ and reductively released by the reductive (R) domain of poxE to yield an aldehyde intermediate. The released aldehyde is then substrate for a Knoevenagel condensation by the hydrolyase poxO followed by an oxidation at the 5-position of the pyrrolidone ring. The presence of the olefin from the amino acid building block allows for migration of the substituted allyl group to occur. This allylic transposition reaction takes place in a conjugate addition, semipinacol-like fashion to yield a succinimide intermediate. Iterative two-electron oxidations of the C7 methyl of the succinimide intermediate to the carboxylic acid can be catalyzed by one of two remaining cytochrome P450 monooxygenasess poxC or poxD to yield oxaleimide A. Subsequent oxidation yields the maleimide scaffold oxaleimide I. Both oxaleimide A and oxaleimide I can undergo oxidative modifications in the decalin ring to yield the series of products oxaleimides B to H. This Penicillium oxalicum (strain 114-2 / CGMCC 5302) (Penicillium decumbens) protein is Hybrid PKS-NRPS synthetase poxE.